Reading from the N-terminus, the 474-residue chain is Cysteine--tRNA ligase (474 aa).

A Zn(2+)-binding site is contributed by Cys-27. The 'HIGH' region motif lies at 29-39 (ITPYDHMHVGH). Positions 213, 238, and 242 each coordinate Zn(2+). The short motif at 271–275 (KMSKS) is the 'KMSKS' region element. Lys-274 contacts ATP.

Belongs to the class-I aminoacyl-tRNA synthetase family. The cofactor is Zn(2+).

Its subcellular location is the cytoplasm. The enzyme catalyses tRNA(Cys) + L-cysteine + ATP = L-cysteinyl-tRNA(Cys) + AMP + diphosphate. The chain is Cysteine--tRNA ligase from Pyrobaculum neutrophilum (strain DSM 2338 / JCM 9278 / NBRC 100436 / V24Sta) (Thermoproteus neutrophilus).